The primary structure comprises 203 residues: Sarcosine oxidase subunit gamma (203 aa).

The protein belongs to the SoxG family. In terms of assembly, heterotetramer composed of subunits alpha (SoxA), beta (SoxB), gamma (SoxG) and delta (SoxD).

The protein resides in the cytoplasm. It carries out the reaction sarcosine + (6S)-5,6,7,8-tetrahydrofolate + O2 = (6R)-5,10-methylene-5,6,7,8-tetrahydrofolate + glycine + H2O2. It catalyses the reaction sarcosine + O2 + H2O = formaldehyde + glycine + H2O2. In terms of biological role, in the presence of tetrahydrofolate, catalyzes the oxidative demethylation of sarcosine to yield glycine, 5,10-methylenetetrahydrofolate and hydrogen peroxide. In the absence of tetrahydrofolate, catalyzes the oxidative demethylation of sarcosine to yield glycine, formaldehyde and hydrogen peroxide. The protein is Sarcosine oxidase subunit gamma of Corynebacterium sp. (strain P-1).